The chain runs to 92 residues: Small ribosomal subunit protein uS19c (92 aa).

This sequence belongs to the universal ribosomal protein uS19 family.

It localises to the plastid. The protein resides in the chloroplast. Functionally, protein S19 forms a complex with S13 that binds strongly to the 16S ribosomal RNA. This Guizotia abyssinica (Niger) protein is Small ribosomal subunit protein uS19c.